Here is a 179-residue protein sequence, read N- to C-terminus: Large ribosomal subunit protein uL5 (179 aa).

This sequence belongs to the universal ribosomal protein uL5 family. In terms of assembly, part of the 50S ribosomal subunit; part of the 5S rRNA/L5/L18/L25 subcomplex. Contacts the 5S rRNA and the P site tRNA. Forms a bridge to the 30S subunit in the 70S ribosome.

This is one of the proteins that bind and probably mediate the attachment of the 5S RNA into the large ribosomal subunit, where it forms part of the central protuberance. In the 70S ribosome it contacts protein S13 of the 30S subunit (bridge B1b), connecting the 2 subunits; this bridge is implicated in subunit movement. Contacts the P site tRNA; the 5S rRNA and some of its associated proteins might help stabilize positioning of ribosome-bound tRNAs. The sequence is that of Large ribosomal subunit protein uL5 from Alkalilimnicola ehrlichii (strain ATCC BAA-1101 / DSM 17681 / MLHE-1).